A 29-amino-acid chain; its full sequence is Cyclotide cter-N (29 aa).

A cross-link (cyclopeptide (Gly-Asn)) is located at residues 1 to 29; that stretch reads GSAFCGETCVLGTCYTPDCSCTALVCLKN. 3 disulfide bridges follow: cysteine 5-cysteine 19, cysteine 9-cysteine 21, and cysteine 14-cysteine 26.

In terms of processing, this is a cyclic peptide.

It localises to the secreted. Probably participates in a plant defense mechanism. The chain is Cyclotide cter-N from Clitoria ternatea (Butterfly pea).